Consider the following 202-residue polypeptide: Cryptic protein (202 aa).

The first 35 residues, M1–S35, serve as a signal peptide directing secretion. N-linked (GlcNAc...) asparagine glycosylation occurs at N65. Residues P94–E123 enclose the EGF-like domain. Intrachain disulfides connect C98–C105, C99–C111, and C113–C122. The GPI-anchor amidated aspartate moiety is linked to residue D166. Residues L167–G202 constitute a propeptide, removed in mature form.

Belongs to the EGF-CFC (Cripto-1/FRL1/Cryptic) family. N-glycosylated. No expressed in adult tissues.

It localises to the cell membrane. The protein localises to the secreted. Functionally, nodal coreceptor involved in the correct establishment of the left-right axis. May play a role in mesoderm and/or neural patterning during gastrulation. The protein is Cryptic protein (Cfc1) of Mus musculus (Mouse).